A 155-amino-acid polypeptide reads, in one-letter code: Large ribosomal subunit protein uL22 (155 aa).

The protein belongs to the universal ribosomal protein uL22 family. In terms of assembly, part of the 50S ribosomal subunit.

Functionally, this protein binds specifically to 23S rRNA. It makes multiple contacts with different domains of the 23S rRNA in the assembled 50S subunit and ribosome. The globular domain of the protein is located near the polypeptide exit tunnel on the outside of the subunit, while an extended beta-hairpin is found that lines the wall of the exit tunnel in the center of the 70S ribosome. The chain is Large ribosomal subunit protein uL22 from Pyrococcus furiosus (strain ATCC 43587 / DSM 3638 / JCM 8422 / Vc1).